A 424-amino-acid chain; its full sequence is Folate-like transporter 2 (424 aa).

Asn-35 carries an N-linked (GlcNAc...) asparagine glycan. 6 consecutive transmembrane segments (helical) span residues 48–68 (IWTY…DVFL), 71–91 (PLLV…VFGK), 99–119 (LEVF…YIYV), 136–156 (ALLV…GLNW), 164–184 (IISL…PGVE), and 233–253 (PLIL…YQVT). Asn-254 is a glycosylation site (N-linked (GlcNAc...) asparagine). A run of 4 helical transmembrane segments spans residues 299–319 (WGDL…FWMS), 324–344 (IVVL…TTTI), 361–381 (LFGI…AVVI), and 392–412 (FVVY…IFGI).

Belongs to the reduced folate carrier (RFC) transporter (TC 2.A.48) family.

The protein localises to the membrane. Unlike folt-1, does not appear to act as a folate transporter. The protein is Folate-like transporter 2 (folt-2) of Caenorhabditis elegans.